Consider the following 920-residue polypeptide: MTDLAELARFTAELPFSLDDFQQRACAALERGHGVLVCAPTGAGKTVVGEFAVHLALAAGGKCFYTTPLKALSNQKYTDLTARYGRNRIGLLTGDQSVNGDSPVVVMTTEVLRNMLYADSFALQGLSHVVMDEVHFIADRMRGPVWEEVILHLPDDVRMVSLSATVSNAEEFGGWVQTVRGDTTVVVDEHRPVPLWQHVLVGKRLFDLFDYDSNVDQSPVNPNLLRHIAHCREADRMSDWRNPRRRAGRGSGVRPRFYRSLARPEVIAILDAEGLLPAITFVFSRFGCDAAVQQCLRSPLRLTSEEERAQIAEVIDHRCGDLADADLAVLGYYEWREGLLRGLAAHHAGMLPAFRHAVEELFTAGLVKAVFATETLALGINMPARTVVLERLVKFNGKQHVPLTPGEYTQLTGRAGRRGIDVEGHAVVIWHPSEDTSGPSAVAGLASARTFPLRSSFVPSYNMTINLVHWMSPERAHALLEQSFAQYQADRSVVGLVRGIERCTQVLGDISSELGGPDAPILEYARLRARIAEMERAQSFVFRLQRKQAANDVLAALRRGDIITITHGRHGGLAVVLESARDSSNPRPLVLTEHRWAGRISSADYMGAAAPVGSMTLPKRVEHRQQRVRRDLASALRSAATRLSVPDIGDGVDGDKIGFNDGVLHDPELASLRAQLRRHRSNNAPGLDTQLQQAERYLRIERYNAQLQRKVAAATNSLARTFDRIVGLLIERDFIRGPADDPQVTDDGRLLARIYSESDLLVAECLRTGAWAGLRPAELAAVVSAVLYETRGDDGPGGPVDAEAPTPRLRQALQHTSRLSATLRADEQRHRIALSREPDDGFVGVIYCWARTGDLAAVLAAADASGNGAPLSAGDFVRWCRQVLDLLDQLRNAAPEPDLRATAKRAINDVRRGVVAVDAG.

A Helicase ATP-binding domain is found at cysteine 26–threonine 184. Alanine 39–threonine 46 lines the ATP pocket. The short motif at aspartate 132–histidine 135 is the DEVH box element. One can recognise a Helicase C-terminal domain in the interval glutamate 265 to histidine 469.

Belongs to the helicase family. SKI2 subfamily.

The protein is Probable helicase HelY (helY) of Mycobacterium leprae (strain TN).